Here is a 377-residue protein sequence, read N- to C-terminus: Porphobilinogen deaminase (377 aa).

S-(dipyrrolylmethanemethyl)cysteine is present on cysteine 269.

It belongs to the HMBS family. Monomer. Requires dipyrromethane as cofactor.

The enzyme catalyses 4 porphobilinogen + H2O = hydroxymethylbilane + 4 NH4(+). The protein operates within porphyrin-containing compound metabolism; protoporphyrin-IX biosynthesis; coproporphyrinogen-III from 5-aminolevulinate: step 2/4. Tetrapolymerization of the monopyrrole PBG into the hydroxymethylbilane pre-uroporphyrinogen in several discrete steps. In Micrococcus luteus (strain ATCC 4698 / DSM 20030 / JCM 1464 / CCM 169 / CCUG 5858 / IAM 1056 / NBRC 3333 / NCIMB 9278 / NCTC 2665 / VKM Ac-2230) (Micrococcus lysodeikticus), this protein is Porphobilinogen deaminase.